We begin with the raw amino-acid sequence, 159 residues long: uncharacterized protein (159 aa).

The 61-residue stretch at 6–66 (LSKKDWEIIK…YLRFDKLGYT (61 aa)) folds into the HTH asnC-type domain. Positions 25 to 44 (DAEIGRRIGLSKSAVRWRRI) form a DNA-binding region, H-T-H motif.

This is an uncharacterized protein from Pyrococcus horikoshii (strain ATCC 700860 / DSM 12428 / JCM 9974 / NBRC 100139 / OT-3).